Here is a 183-residue protein sequence, read N- to C-terminus: Beta-defensin 129 (183 aa).

The signal sequence occupies residues M1 to T19. Intrachain disulfides connect C27–C53, C34–C48, and C38–C54. Positions T141–Q183 are disordered. Residues S159–L170 show a composition bias toward pro residues.

It belongs to the beta-defensin family.

The protein localises to the secreted. Has antibacterial activity. The chain is Beta-defensin 129 (DEFB129) from Pan troglodytes (Chimpanzee).